Reading from the N-terminus, the 330-residue chain is Protein RfbI (330 aa).

Positions 3–89 (HIIKIFPSNI…ELNAHFFPEL (87 aa)) constitute a 2Fe-2S ferredoxin-type domain. The [2Fe-2S] cluster site is built by cysteine 37, cysteine 42, and cysteine 45. One can recognise an FAD-binding FR-type domain in the interval 94 to 192 (KKIVPCKVNS…EGPCGTFFIR (99 aa)).

[2Fe-2S] cluster serves as cofactor.

It functions in the pathway bacterial outer membrane biogenesis; LPS O-antigen biosynthesis. The sequence is that of Protein RfbI (rfbI) from Salmonella typhimurium (strain LT2 / SGSC1412 / ATCC 700720).